Here is a 165-residue protein sequence, read N- to C-terminus: UPF0303 protein ACP_1015 (165 aa).

It belongs to the UPF0303 family.

This is UPF0303 protein ACP_1015 from Acidobacterium capsulatum (strain ATCC 51196 / DSM 11244 / BCRC 80197 / JCM 7670 / NBRC 15755 / NCIMB 13165 / 161).